Reading from the N-terminus, the 528-residue chain is Probable methylmalonate-semialdehyde/malonate-semialdehyde dehydrogenase [acylating], mitochondrial (528 aa).

The N-terminal 26 residues, 1-26, are a transit peptide targeting the mitochondrion; sequence MLSFKFAKSASKVIGNRNFHSSSASL. The NAD(+) site is built by F175, K199, E202, and R203. C307 (nucleophile) is an active-site residue. Residue E408 participates in NAD(+) binding.

The protein belongs to the aldehyde dehydrogenase family. As to quaternary structure, homotetramer.

The protein localises to the mitochondrion. It catalyses the reaction 2-methyl-3-oxopropanoate + NAD(+) + CoA + H2O = propanoyl-CoA + hydrogencarbonate + NADH + H(+). The catalysed reaction is 3-oxopropanoate + NAD(+) + CoA + H2O = hydrogencarbonate + acetyl-CoA + NADH + H(+). Functionally, probable malonate and methylmalonate semialdehyde dehydrogenase involved in the catabolism of valine, thymine, and compounds catabolized by way of beta-alanine, including uracil and cytidine. The sequence is that of Probable methylmalonate-semialdehyde/malonate-semialdehyde dehydrogenase [acylating], mitochondrial (mmsdh) from Dictyostelium discoideum (Social amoeba).